The following is a 435-amino-acid chain: Trigger factor (435 aa).

Residues 125–147 are disordered; that stretch reads MEVPEQDTSVSDADVDSELENKR. The 86-residue stretch at 164-249 folds into the PPIase FKBP-type domain; it reads GDTVVIDYEG…IHEVKEKQLP (86 aa).

It belongs to the FKBP-type PPIase family. Tig subfamily.

The protein resides in the cytoplasm. The catalysed reaction is [protein]-peptidylproline (omega=180) = [protein]-peptidylproline (omega=0). Functionally, involved in protein export. Acts as a chaperone by maintaining the newly synthesized protein in an open conformation. Functions as a peptidyl-prolyl cis-trans isomerase. The polypeptide is Trigger factor (Limosilactobacillus fermentum (strain NBRC 3956 / LMG 18251) (Lactobacillus fermentum)).